We begin with the raw amino-acid sequence, 964 residues long: Lon protease homolog, mitochondrial (964 aa).

The Lon N-terminal domain maps to 89-300 (VIALPLPHRP…LTLELVKKEM (212 aa)). Residue 455 to 462 (GPPGVGKT) coordinates ATP. The segment at 663 to 740 (GVSNEPDHES…TSKGNKGTDG (78 aa)) is disordered. The segment covering 673–687 (VSASVTEESGNGDNT) has biased composition (polar residues). Positions 688-698 (TTKDEILKDPA) are enriched in basic and acidic residues. Residues 703 to 712 (SVTNNVTNPA) show a composition bias toward polar residues. Residues 773 to 957 (HTPVGVVMGL…SEIYDLAFQS (185 aa)) form the Lon proteolytic domain. Catalysis depends on residues serine 863 and lysine 906.

This sequence belongs to the peptidase S16 family. As to quaternary structure, homoheptamer. Organized in a ring with a central cavity.

Its subcellular location is the mitochondrion matrix. The catalysed reaction is Hydrolysis of proteins in presence of ATP.. ATP-dependent serine protease that mediates the selective degradation of misfolded, unassembled or oxidatively damaged polypeptides as well as certain short-lived regulatory proteins in the mitochondrial matrix. May also have a chaperone function in the assembly of inner membrane protein complexes. Participates in the regulation of mitochondrial gene expression and in the maintenance of the integrity of the mitochondrial genome. Binds to mitochondrial DNA in a site-specific manner. The sequence is that of Lon protease homolog, mitochondrial (LON2) from Zea mays (Maize).